Consider the following 305-residue polypeptide: Sulfate adenylyltransferase subunit 2 (305 aa).

It belongs to the PAPS reductase family. CysD subfamily. In terms of assembly, heterodimer composed of CysD, the smaller subunit, and CysN.

The catalysed reaction is sulfate + ATP + H(+) = adenosine 5'-phosphosulfate + diphosphate. It participates in sulfur metabolism; hydrogen sulfide biosynthesis; sulfite from sulfate: step 1/3. In terms of biological role, with CysN forms the ATP sulfurylase (ATPS) that catalyzes the adenylation of sulfate producing adenosine 5'-phosphosulfate (APS) and diphosphate, the first enzymatic step in sulfur assimilation pathway. APS synthesis involves the formation of a high-energy phosphoric-sulfuric acid anhydride bond driven by GTP hydrolysis by CysN coupled to ATP hydrolysis by CysD. In Myxococcus xanthus (strain DK1622), this protein is Sulfate adenylyltransferase subunit 2.